A 166-amino-acid polypeptide reads, in one-letter code: Outer membrane protein assembly factor BamE (166 aa).

The first 18 residues, 1-18, serve as a signal peptide directing secretion; it reads MKRTVFPLAVAAALTLTA. A lipid anchor (N-palmitoyl cysteine) is attached at C19. C19 carries the S-diacylglycerol cysteine lipid modification. The tract at residues 143–166 is disordered; it reads LFSNDDSGEMPVKPESKPSDLLNE.

It belongs to the BamE family. In terms of assembly, part of the Bam complex.

The protein localises to the cell outer membrane. Part of the outer membrane protein assembly complex, which is involved in assembly and insertion of beta-barrel proteins into the outer membrane. This Methylomonas methanica (strain DSM 25384 / MC09) protein is Outer membrane protein assembly factor BamE.